Here is a 341-residue protein sequence, read N- to C-terminus: L-threonine 3-dehydrogenase (341 aa).

Cysteine 38 serves as a coordination point for Zn(2+). Residues threonine 40 and histidine 43 each act as charge relay system in the active site. Zn(2+) is bound by residues histidine 63, glutamate 64, cysteine 93, cysteine 96, cysteine 99, and cysteine 107. Residues isoleucine 175, aspartate 195, arginine 200, 262-264 (LGI), and 286-287 (IY) each bind NAD(+).

It belongs to the zinc-containing alcohol dehydrogenase family. In terms of assembly, homotetramer. Zn(2+) is required as a cofactor.

The protein localises to the cytoplasm. It carries out the reaction L-threonine + NAD(+) = (2S)-2-amino-3-oxobutanoate + NADH + H(+). It functions in the pathway amino-acid degradation; L-threonine degradation via oxydo-reductase pathway; glycine from L-threonine: step 1/2. Its function is as follows. Catalyzes the NAD(+)-dependent oxidation of L-threonine to 2-amino-3-ketobutyrate. The protein is L-threonine 3-dehydrogenase of Shewanella halifaxensis (strain HAW-EB4).